A 370-amino-acid chain; its full sequence is NSFL1 cofactor p47 (370 aa).

The tract at residues 54 to 73 (SQATPSSVSRGTAPSDNRVT) is disordered. Ser74, Ser102, Ser114, and Ser140 each carry phosphoserine. 2 disordered regions span residues 80–116 (HDQDEEEEEEEGQRFYAGGSERSGQQIVGPPRKKSPN) and 138–157 (TKSPGETSKPRPFAGGGYRL). The Nuclear localization signal signature appears at 109–115 (PPRKKSP). Tyr167 carries the phosphotyrosine modification. A Nuclear localization signal motif is present at residues 172 to 175 (RRRH). Ser176, Ser192, and Ser272 each carry phosphoserine. Residues 179–244 (DVHVVLKLWK…MEDHRDEDFV (66 aa)) enclose the SEP domain. The 78-residue stretch at 291–368 (EAEPTTNIQI…NLLNAVIVQR (78 aa)) folds into the UBX domain.

The protein belongs to the NSFL1C family. Part of a ternary complex containing STX5A, NSFL1C and VCP. NSFL1C forms a homotrimer that binds to one end of a VCP homohexamer. The complex binds to membranes enriched in phosphatidylethanolamine-containing lipids and promotes Golgi membrane fusion. Interaction with VCIP135 leads to dissociation of the complex via ATP hydrolysis by VCP. Binds ubiquitin and mono-ubiquitinated proteins via its N-terminal UBA-like domain when bound to VCP. In terms of processing, phosphorylated during mitosis. Phosphorylation inhibits interaction with Golgi membranes and is required for the fragmentation of the Golgi stacks during mitosis.

Its subcellular location is the nucleus. It is found in the golgi apparatus. It localises to the golgi stack. The protein resides in the chromosome. The protein localises to the cytoplasm. Its subcellular location is the cytoskeleton. It is found in the microtubule organizing center. It localises to the centrosome. Reduces the ATPase activity of VCP. Necessary for the fragmentation of Golgi stacks during mitosis and for VCP-mediated reassembly of Golgi stacks after mitosis. May play a role in VCP-mediated formation of transitional endoplasmic reticulum (tER). Inhibits the activity of CTSL (in vitro). Together with UBXN2B/p37, regulates the centrosomal levels of kinase AURKA/Aurora A during mitotic progression by promoting AURKA removal from centrosomes in prophase. Also, regulates spindle orientation during mitosis. The chain is NSFL1 cofactor p47 (Nsfl1c) from Mus musculus (Mouse).